The sequence spans 603 residues: uncharacterized protein (603 aa).

A PE domain is found at Met-1–Ala-93. The interval Gly-309–Glu-333 is disordered.

Belongs to the mycobacterial PE family. PGRS subfamily.

This is an uncharacterized protein from Mycobacterium tuberculosis (strain CDC 1551 / Oshkosh).